The chain runs to 163 residues: Late embryogenesis abundant protein Dc3 (163 aa).

Disordered stretches follow at residues 1-117 and 139-163; these read MASH…GGLM and FGMA…ARTE. 3 stretches are compositionally biased toward basic and acidic residues: residues 28–56, 67–84, and 91–113; these read TMKD…ESKD, GAVK…KEKT, and TKEK…KEKT. A run of 6 repeats spans residues 32-42, 43-53, 65-75, 76-86, 87-97, and 103-115. A 6 X 11 AA approximate repeats region spans residues 32–115; the sequence is KAQAAKDKAS…AVAGKEKTGG (84 aa). The segment covering 152–163 has biased composition (low complexity); sequence TTRVTRSSARTE.

Belongs to the LEA type 4 family.

This is Late embryogenesis abundant protein Dc3 from Daucus carota (Wild carrot).